Consider the following 209-residue polypeptide: MSSVAVIDYGMGNLRSVSKALEQVAGKVRIDVTSNPQRIRAADRVVFPGVGAIRDCMHELRRLNLDIVVAQCAADRPFLGICLGLQALLELSEENHGVPCLGILPGRVQRFDAVKADLKVPHMGWNQAHQVRAHPLWNAIPQNCRFYFVHSYYTVPDETSLVASRTDYSTSFASALARDNIFAVQFHPEKSHTFGLQLLANFLTWNGVS.

A Glutamine amidotransferase type-1 domain is found at 3 to 209 (SVAVIDYGMG…ANFLTWNGVS (207 aa)). Catalysis depends on C82, which acts as the Nucleophile. Active-site residues include H187 and E189.

In terms of assembly, heterodimer of HisH and HisF.

Its subcellular location is the cytoplasm. The catalysed reaction is 5-[(5-phospho-1-deoxy-D-ribulos-1-ylimino)methylamino]-1-(5-phospho-beta-D-ribosyl)imidazole-4-carboxamide + L-glutamine = D-erythro-1-(imidazol-4-yl)glycerol 3-phosphate + 5-amino-1-(5-phospho-beta-D-ribosyl)imidazole-4-carboxamide + L-glutamate + H(+). It catalyses the reaction L-glutamine + H2O = L-glutamate + NH4(+). It functions in the pathway amino-acid biosynthesis; L-histidine biosynthesis; L-histidine from 5-phospho-alpha-D-ribose 1-diphosphate: step 5/9. In terms of biological role, IGPS catalyzes the conversion of PRFAR and glutamine to IGP, AICAR and glutamate. The HisH subunit catalyzes the hydrolysis of glutamine to glutamate and ammonia as part of the synthesis of IGP and AICAR. The resulting ammonia molecule is channeled to the active site of HisF. This is Imidazole glycerol phosphate synthase subunit HisH from Nitrosococcus oceani (strain ATCC 19707 / BCRC 17464 / JCM 30415 / NCIMB 11848 / C-107).